Consider the following 631-residue polypeptide: Mu-like prophage FluMu protein gp42 (631 aa).

2 consecutive transmembrane segments (helical) span residues 56-76 (LGNI…TMVG) and 385-405 (GLAD…PVYV). The tract at residues 425–453 (IEDGRDKDKKTQKKNKPPRPKRGRGSVRS) is disordered. A compositionally biased stretch (basic residues) spans 434–449 (KTQKKNKPPRPKRGRG). Helical transmembrane passes span 455 to 475 (VAAV…VTTA), 495 to 515 (SKAV…TVLM), and 543 to 563 (ALIP…GWLG).

This sequence to phage Mu protein gp42.

Its subcellular location is the cell membrane. The sequence is that of Mu-like prophage FluMu protein gp42 from Haemophilus influenzae (strain ATCC 51907 / DSM 11121 / KW20 / Rd).